We begin with the raw amino-acid sequence, 374 residues long: Nuclear hormone receptor family member nhr-57 (374 aa).

The segment at residues 7-84 is a DNA-binding region (nuclear receptor); the sequence is RKYCSVCHQL…VGMNPEVVQA (78 aa). NR C4-type zinc fingers lie at residues 10–30 and 48–67; these read CSVC…CKAC and CRKK…CKSC. Positions 124-374 constitute an NR LBD domain; that stretch reads QMTPTLCGVM…DKIYKIIDGQ (251 aa).

Belongs to the nuclear hormone receptor family.

It localises to the nucleus. In terms of biological role, orphan nuclear receptor. This is Nuclear hormone receptor family member nhr-57 (nhr-57) from Caenorhabditis elegans.